The primary structure comprises 321 residues: tRNA U34 carboxymethyltransferase (321 aa).

Residues Lys90, Trp104, Lys109, Gly129, 151-153, 180-181, Met195, Tyr199, and Arg314 contribute to the carboxy-S-adenosyl-L-methionine site; these read DPT and IE.

Belongs to the class I-like SAM-binding methyltransferase superfamily. CmoB family. Homotetramer.

It catalyses the reaction carboxy-S-adenosyl-L-methionine + 5-hydroxyuridine(34) in tRNA = 5-carboxymethoxyuridine(34) in tRNA + S-adenosyl-L-homocysteine + H(+). Functionally, catalyzes carboxymethyl transfer from carboxy-S-adenosyl-L-methionine (Cx-SAM) to 5-hydroxyuridine (ho5U) to form 5-carboxymethoxyuridine (cmo5U) at position 34 in tRNAs. The polypeptide is tRNA U34 carboxymethyltransferase (Haemophilus influenzae (strain ATCC 51907 / DSM 11121 / KW20 / Rd)).